A 65-amino-acid polypeptide reads, in one-letter code: Large ribosomal subunit protein bL35 (65 aa).

Belongs to the bacterial ribosomal protein bL35 family.

This chain is Large ribosomal subunit protein bL35, found in Synechococcus sp. (strain CC9311).